The primary structure comprises 489 residues: Probable anthranilate synthase component 1 (489 aa).

L-tryptophan is bound by residues Ser54 and Pro262–Met264. Residue Gly297–Thr298 coordinates chorismate. Residue Glu324 coordinates Mg(2+). Ser390 and Ser392 each carry phosphoserine. Chorismate is bound by residues Tyr412, Arg433, Gly447 to Gly449, and Gly449. Glu462 serves as a coordination point for Mg(2+). Ser488 bears the Phosphoserine mark.

This sequence belongs to the anthranilate synthase component I family. Tetramer of two components I and two components II. The cofactor is Mg(2+).

It carries out the reaction chorismate + L-glutamine = anthranilate + pyruvate + L-glutamate + H(+). Its pathway is amino-acid biosynthesis; L-tryptophan biosynthesis; L-tryptophan from chorismate: step 1/5. The polypeptide is Probable anthranilate synthase component 1 (trp3) (Schizosaccharomyces pombe (strain 972 / ATCC 24843) (Fission yeast)).